A 130-amino-acid polypeptide reads, in one-letter code: Secreted RxLR effector protein 68 (130 aa).

The signal sequence occupies residues 1–29; sequence MRCVCASIRRTRIIEFLMFFALSSSTASC. The N-linked (GlcNAc...) asparagine glycan is linked to Asn-36. Residues 45-48 carry the RxLR motif; sequence RWLR.

The protein belongs to the RxLR effector family.

Its subcellular location is the secreted. It is found in the host cytoplasm. The protein resides in the host nucleus. Effector that acts as a broad suppressor of cell death to interrupt plant immunity. Inhibits cell death induced by cell death-inducing proteins, including the PAMP elicitor INF1 from P.infestans. The protein is Secreted RxLR effector protein 68 of Plasmopara viticola (Downy mildew of grapevine).